The sequence spans 307 residues: MKFQKRNIQLVLILLLILNNCFINSQVENSKKEKVDVSALIQSYGSELFNYLNNWNKVEENNNKNNNNNNNNNNNNNNNNKNSKVKNDDSIVNTFSNYGNQILNYLNIGDGGEKQKQNQKEKENQSVFSKFSNNVLGLFNFEKTKDKKEDEGILPSIIKNIQDYVKWGKNENNESSGDKYPNFETQSSSFSHSPYGDIFGININDIIASPLLNEISDSSLNYLKQQFGLSNQIIQLLIQFRNTIIFAITFIIFLFTYLIIYYLASIGNSIVISFIIGVLTVFLWVIITLLFTIVIGYKKNGEKTLEL.

The N-terminal stretch at 1–25 (MKFQKRNIQLVLILLLILNNCFINS) is a signal peptide. Residues 60–90 (ENNNKNNNNNNNNNNNNNNNNKNSKVKNDDS) form a disordered region. The span at 63-82 (NKNNNNNNNNNNNNNNNNKN) shows a compositional bias: low complexity. 2 N-linked (GlcNAc...) asparagine glycosylation sites follow: N124 and N173. Helical transmembrane passes span 244–264 (IIFAITFIIFLFTYLIIYYLA) and 275–295 (IIGVLTVFLWVIITLLFTIVI).

The protein resides in the membrane. This is an uncharacterized protein from Dictyostelium discoideum (Social amoeba).